Consider the following 132-residue polypeptide: Large-conductance mechanosensitive channel (132 aa).

A run of 2 helical transmembrane segments spans residues 14 to 34 (VIDL…VSSL) and 67 to 87 (GNFI…FMFV).

This sequence belongs to the MscL family. As to quaternary structure, homopentamer.

The protein localises to the cell membrane. In terms of biological role, channel that opens in response to stretch forces in the membrane lipid bilayer. May participate in the regulation of osmotic pressure changes within the cell. The polypeptide is Large-conductance mechanosensitive channel (Bacillus cereus (strain AH820)).